Consider the following 79-residue polypeptide: Acyl carrier protein (79 aa).

The Carrier domain occupies Ser2–Thr77. Ser37 carries the O-(pantetheine 4'-phosphoryl)serine modification.

This sequence belongs to the acyl carrier protein (ACP) family. In terms of processing, 4'-phosphopantetheine is transferred from CoA to a specific serine of apo-ACP by AcpS. This modification is essential for activity because fatty acids are bound in thioester linkage to the sulfhydryl of the prosthetic group.

The protein localises to the cytoplasm. It participates in lipid metabolism; fatty acid biosynthesis. Functionally, carrier of the growing fatty acid chain in fatty acid biosynthesis. The sequence is that of Acyl carrier protein from Rhodospirillum centenum (strain ATCC 51521 / SW).